We begin with the raw amino-acid sequence, 281 residues long: 4-diphosphocytidyl-2-C-methyl-D-erythritol kinase (281 aa).

K15 is a catalytic residue. 98-108 (PTGAGLGGGSS) is an ATP binding site. The active site involves D140.

This sequence belongs to the GHMP kinase family. IspE subfamily.

It catalyses the reaction 4-CDP-2-C-methyl-D-erythritol + ATP = 4-CDP-2-C-methyl-D-erythritol 2-phosphate + ADP + H(+). The protein operates within isoprenoid biosynthesis; isopentenyl diphosphate biosynthesis via DXP pathway; isopentenyl diphosphate from 1-deoxy-D-xylulose 5-phosphate: step 3/6. Catalyzes the phosphorylation of the position 2 hydroxy group of 4-diphosphocytidyl-2C-methyl-D-erythritol. The chain is 4-diphosphocytidyl-2-C-methyl-D-erythritol kinase from Neisseria meningitidis serogroup C (strain 053442).